A 366-amino-acid chain; its full sequence is Homeobox-leucine zipper protein HOX21 (366 aa).

2 disordered regions span residues 25–81 and 94–132; these read QQAA…SSAQ and MLGKRPMSYGDGGGGGDEVNGGGEDELSDDGSQAGEKKR. A compositionally biased stretch (basic residues) spans 36-48; the sequence is HHHHHHHGHHGHH. Over residues 62 to 74 the composition is skewed to pro residues; sequence GPPPPPPPHPHNP. Gly residues predominate over residues 103–115; the sequence is GDGGGGGDEVNGG. Positions 127–186 form a DNA-binding region, homeobox; that stretch reads AGEKKRRLNVEQVRTLEKNFELGNKLEPERKMQLARALGLQPRQVAIWFQNRRARWKTKQ. The tract at residues 185 to 229 is leucine-zipper; the sequence is KQLEKDYDALKRQLDAVKAENDALLNHNKKLQAEIVALKGREAAS. Disordered stretches follow at residues 239 to 287 and 312 to 336; these read EASC…GGGG and LHSSSGGAGGPKMEHHGGGGNVQAA. Polar residues predominate over residues 240 to 252; that stretch reads ASCSNRSENSSEI.

This sequence belongs to the HD-ZIP homeobox family. Class I subfamily. In terms of tissue distribution, expressed in seedlings, roots, stems, leaf blades and panicles.

The protein localises to the nucleus. Probable transcription factor. This chain is Homeobox-leucine zipper protein HOX21 (HOX21), found in Oryza sativa subsp. japonica (Rice).